A 1187-amino-acid polypeptide reads, in one-letter code: Nucleolar protein 6 (1187 aa).

Positions 1 to 20 (MGRIKENQSKKKTLLRDSKA) are enriched in basic and acidic residues. Disordered regions lie at residues 1–64 (MGRI…FKHP) and 1134–1187 (REQR…SALC).

The protein belongs to the NRAP family. In terms of assembly, part of the small subunit (SSU) processome, composed of more than 70 proteins and the RNA chaperone small nucleolar RNA (snoRNA) U3.

It is found in the nucleus. It localises to the nucleolus. The protein resides in the chromosome. Functionally, part of the small subunit (SSU) processome, first precursor of the small eukaryotic ribosomal subunit. During the assembly of the SSU processome in the nucleolus, many ribosome biogenesis factors, an RNA chaperone and ribosomal proteins associate with the nascent pre-rRNA and work in concert to generate RNA folding, modifications, rearrangements and cleavage as well as targeted degradation of pre-ribosomal RNA by the RNA exosome. In Drosophila mojavensis (Fruit fly), this protein is Nucleolar protein 6.